The following is a 268-amino-acid chain: Shikimate dehydrogenase (NADP(+)) (268 aa).

Shikimate-binding positions include 14 to 16 (SKS) and Thr-61. The Proton acceptor role is filled by Lys-65. Positions 86 and 102 each coordinate shikimate. NADP(+) contacts are provided by residues 126–130 (GAGGA), 149–154 (NRTFSK), and Met-213. Position 215 (Tyr-215) interacts with shikimate. Gly-238 is an NADP(+) binding site.

It belongs to the shikimate dehydrogenase family. In terms of assembly, homodimer.

The enzyme catalyses shikimate + NADP(+) = 3-dehydroshikimate + NADPH + H(+). Its pathway is metabolic intermediate biosynthesis; chorismate biosynthesis; chorismate from D-erythrose 4-phosphate and phosphoenolpyruvate: step 4/7. Functionally, involved in the biosynthesis of the chorismate, which leads to the biosynthesis of aromatic amino acids. Catalyzes the reversible NADPH linked reduction of 3-dehydroshikimate (DHSA) to yield shikimate (SA). The protein is Shikimate dehydrogenase (NADP(+)) of Haemophilus influenzae (strain PittEE).